The chain runs to 492 residues: Endoglucanase 15 (492 aa).

The N-terminal stretch at 1-30 (MSCISSQCFITIKSICIVLLLSITCGAVSA) is a signal peptide. Aspartate 86 functions as the Nucleophile in the catalytic mechanism. Catalysis depends on residues histidine 414, aspartate 466, and glutamate 475.

It belongs to the glycosyl hydrolase 9 (cellulase E) family.

The protein localises to the secreted. The enzyme catalyses Endohydrolysis of (1-&gt;4)-beta-D-glucosidic linkages in cellulose, lichenin and cereal beta-D-glucans.. In Arabidopsis thaliana (Mouse-ear cress), this protein is Endoglucanase 15.